Here is a 254-residue protein sequence, read N- to C-terminus: NADPH-dependent ferric-chelate reductase (254 aa).

In terms of domain architecture, FAD-binding FR-type spans 15-136 (LRFRELTVLR…AGPRGSLVVP (122 aa)).

Belongs to the SIP oxidoreductase family.

It localises to the cytoplasm. It catalyses the reaction 2 a Fe(II)-siderophore + NADP(+) + H(+) = 2 a Fe(III)-siderophore + NADPH. In terms of biological role, plays a role in iron homeostasis under excess nickel conditions. In Escherichia coli (strain K12), this protein is NADPH-dependent ferric-chelate reductase (yqjH).